Here is a 564-residue protein sequence, read N- to C-terminus: MPKVEVYRSILLGKIGKDLTDCELVSILEMAKAEICEFYTGNDKIKIEFNDTNRPDLWSYTGLARQIKTYLFGQLPSFEFFSTADNLQKFYGEILVSPEAFSIRPFIFGFLAKGMICNEQMLETLIQLQEKLCHNYGQKRKRVAMGMYSSASIEFPVSYVTCNSDYRFIPLGMDIEMSIKEINKRHPKGIEYASILEHFTEYPLLLDYNDKVLSYPPVINSHDIGALKVGDTDLFIEVTGTNLEATLLSLSVVACDLHDMGFEILPVKTVFPKETPFGKEIICPYYFQNTLEVSVESVNRMFGSNFTVNDMCLDLKKLGISAYFKELDKFYIIPPVYRNDFLHEVDVIEEIMIGRGLDSFKPELPKDFTLGKLSQIEEFSRKIKNLMIGMGFQEMIYNYLGSRTDFIEKMNIKSDEFLSVANPMTEGYEYVRGSIVPDLLKSESISSNFPYPHKIFEIGKVALKDLSSVDGTMTYDNLAFLMADKEFSFNEINSLVSSLFYYLNIEFKLRESSQTLYINGRGADILINDIILGSFGEVSPYILSNFGIMVPCCVLEINLNKILH.

Residues 286-362 enclose the B5 domain; sequence YFQNTLEVSV…IGRGLDSFKP (77 aa). Positions 340, 346, 349, and 350 each coordinate Mg(2+).

It belongs to the phenylalanyl-tRNA synthetase beta subunit family. Type 2 subfamily. Tetramer of two alpha and two beta subunits. Requires Mg(2+) as cofactor.

The protein localises to the cytoplasm. The catalysed reaction is tRNA(Phe) + L-phenylalanine + ATP = L-phenylalanyl-tRNA(Phe) + AMP + diphosphate + H(+). This Borrelia hermsii (strain HS1 / DAH) protein is Phenylalanine--tRNA ligase beta subunit.